Consider the following 302-residue polypeptide: MSSAAELSPTPFGRLLTAMVTPFDADGCVDLALAGRLARYLVDEGSDGLVVCGTTGESPTLSWQEQHQLLGVVRQAVGPGVKVLAGTGSNSTAEAIEATTQAAAVGADGALVVVPYYNKPPQEGLEAHFRAIAQAAPELPLMLYNIPGRTGCSLAPATVARLMECPNVVSFKAASGTTDEVTQLRLQCGSKLAVYSGDDGLLLPMLSVGAVGVVSVASHLVGRRLKAMIEAYLNGQGALALSYHEQLQPLFKALFVTTNPIPVKAALELSGWPVGSPRLPLLPLDPVMRDALSNTLTALCQT.

Threonine 55 contacts pyruvate. Catalysis depends on tyrosine 144, which acts as the Proton donor/acceptor. The active-site Schiff-base intermediate with substrate is lysine 172. Valine 214 lines the pyruvate pocket.

Belongs to the DapA family. As to quaternary structure, homotetramer; dimer of dimers.

The protein localises to the cytoplasm. The catalysed reaction is L-aspartate 4-semialdehyde + pyruvate = (2S,4S)-4-hydroxy-2,3,4,5-tetrahydrodipicolinate + H2O + H(+). Its pathway is amino-acid biosynthesis; L-lysine biosynthesis via DAP pathway; (S)-tetrahydrodipicolinate from L-aspartate: step 3/4. Functionally, catalyzes the condensation of (S)-aspartate-beta-semialdehyde [(S)-ASA] and pyruvate to 4-hydroxy-tetrahydrodipicolinate (HTPA). The protein is 4-hydroxy-tetrahydrodipicolinate synthase of Prochlorococcus marinus (strain MIT 9313).